A 632-amino-acid chain; its full sequence is Fem-3 mRNA-binding factor 2 (632 aa).

A compositionally biased stretch (basic residues) spans 1–11 (MDQSKMRRTNQ). Residues 1–37 (MDQSKMRRTNQFRKTSQKPPSTGIDSYPTPAQSPMAQ) are disordered. A compositionally biased stretch (polar residues) spans 12 to 35 (FRKTSQKPPSTGIDSYPTPAQSPM). Residues 162 to 566 (TRSNNVLPTW…KMIETLANLR (405 aa)) form the PUM-HD domain. 8 Pumilio repeats span residues 187-225 (EVLDSGDLMKFAVDKTGCQFLEKAVKGSLTSYQKFQLFE), 226-264 (QVIGRKDDFLKLSTNIFGNYLVQSVIGISLATNDDGYTK), 271-307 (NFISSQMTDMCLDKFACRVIQSSLQNMDLSLACKLVQ), 308-332 (ALPRDARLIAICVDQNANHVIQKVV), 345-384 (DFVATPEHLRQICSDKYGCRVVQTIIEKLTADSMNVDLTS), 400-436 (SVTNRCQELATNEYANYIIQHIVSNDDLAVYRECIIE), 438-473 (CLMRNLLSLSQEKFASHVVEKAFLHAPLELLAEMMD), and 484-521 (DTGKDALDIMMFHQFGNYVVQCMLTICCDAVSGRRQTK). The segment at 609 to 632 (MLEPRSNKSSVSVKFSSSGSHGDD) is disordered. Residues 615–632 (NKSSVSVKFSSSGSHGDD) are compositionally biased toward low complexity.

As to quaternary structure, interacts (via C-terminus) with gld-3 isoform A in an RNA-independent manner. Interacts with dlc-1, and is required for the localization of fbf-2 to P granules. Interacts (via RNA-binding domain) with lst-1, probably displaces bound auto-inhibitory C-terminal tail and alters its RNA-binding affinity. Expressed specifically in the germline (at protein level).

The protein localises to the cytoplasm. It is found in the cytoplasmic granule. RNA-binding protein that binds to the consensus sequence 5'-UGUGCCAUA-3' in mRNA 3'-UTRs. Involved in the control of stem cells and sex determination in the C.elegans hermaphrodite germline. May also play a role in the hermaphrodite germline proliferation and oogenesis. By binding to the 3'-UTR, represses phosphatase lip-1 expression in the distal part of the germline mitotic zone. Binds specifically to the regulatory region of fem-3 3'-UTR and mediates the sperm/oocyte switch. Negatively regulates gld-3 expression possibly by directly binding to two sites within the gld-3 isoform b 3'-UTR. Suppresses germline tumor formation by preventing the dedifferentiation of secondary spermatocytes. C-terminal disordered region probably auto-inhibits RNA binding; auto-inhibition may be reversed by interaction with lst-1. In Caenorhabditis elegans, this protein is Fem-3 mRNA-binding factor 2.